A 264-amino-acid polypeptide reads, in one-letter code: Stage 0 sporulation protein A (264 aa).

Positions 5–123 constitute a Response regulatory domain; it reads KVCLVDDNKE…NLTSHIRQVS (119 aa). The Ca(2+) site is built by aspartate 10, aspartate 11, and aspartate 56. Aspartate 56 carries the post-translational modification 4-aspartylphosphate. The H-T-H motif DNA-binding region spans 196 to 215; it reads PDIAKKYNTTASRVERAIRH.

The cofactor is Ca(2+). Post-translationally, phosphorylated by KinA and KinB.

The protein localises to the cytoplasm. In terms of biological role, may play the central regulatory role in sporulation. It may be an element of the effector pathway responsible for the activation of sporulation genes in response to nutritional stress. Spo0A may act in concert with Spo0H (a sigma factor) to control the expression of some genes that are critical to the sporulation process. Repressor of abrB, activator of the spoIIa operon. Binds the DNA sequence 5'-TGNCGAA-3' (0A box). This chain is Stage 0 sporulation protein A (spo0A), found in Bacillus anthracis.